The sequence spans 510 residues: Putative cytochrome P450 cyp-13B1 (510 aa).

Cys456 provides a ligand contact to heme.

The protein belongs to the cytochrome P450 family. The cofactor is heme.

In terms of biological role, cytochromes P450 are a group of heme-thiolate monooxygenases. They oxidize a variety of structurally unrelated compounds, including steroids, fatty acids, and xenobiotics. May play a role in the regulation of lifespan. The polypeptide is Putative cytochrome P450 cyp-13B1 (Caenorhabditis elegans).